Consider the following 217-residue polypeptide: Pyridoxine/pyridoxamine 5'-phosphate oxidase (217 aa).

Substrate is bound by residues 13 to 16 (RRDY) and lysine 71. Residues 66 to 71 (RIVLLK), 81 to 82 (YT), lysine 88, and glutamine 110 contribute to the FMN site. Residues tyrosine 128, arginine 132, and serine 136 each contribute to the substrate site. Residues 145–146 (QS) and tryptophan 190 each bind FMN. 196–198 (RLH) is a substrate binding site. FMN is bound at residue arginine 200.

It belongs to the pyridoxamine 5'-phosphate oxidase family. Homodimer. It depends on FMN as a cofactor.

It catalyses the reaction pyridoxamine 5'-phosphate + O2 + H2O = pyridoxal 5'-phosphate + H2O2 + NH4(+). The enzyme catalyses pyridoxine 5'-phosphate + O2 = pyridoxal 5'-phosphate + H2O2. The protein operates within cofactor metabolism; pyridoxal 5'-phosphate salvage; pyridoxal 5'-phosphate from pyridoxamine 5'-phosphate: step 1/1. Its pathway is cofactor metabolism; pyridoxal 5'-phosphate salvage; pyridoxal 5'-phosphate from pyridoxine 5'-phosphate: step 1/1. In terms of biological role, catalyzes the oxidation of either pyridoxine 5'-phosphate (PNP) or pyridoxamine 5'-phosphate (PMP) into pyridoxal 5'-phosphate (PLP). In Edwardsiella ictaluri (strain 93-146), this protein is Pyridoxine/pyridoxamine 5'-phosphate oxidase.